A 149-amino-acid polypeptide reads, in one-letter code: D-aminoacyl-tRNA deacylase (149 aa).

The short motif at 138–139 is the Gly-cisPro motif, important for rejection of L-amino acids element; that stretch reads GP.

This sequence belongs to the DTD family. Homodimer.

Its subcellular location is the cytoplasm. It catalyses the reaction glycyl-tRNA(Ala) + H2O = tRNA(Ala) + glycine + H(+). The enzyme catalyses a D-aminoacyl-tRNA + H2O = a tRNA + a D-alpha-amino acid + H(+). Functionally, an aminoacyl-tRNA editing enzyme that deacylates mischarged D-aminoacyl-tRNAs. Also deacylates mischarged glycyl-tRNA(Ala), protecting cells against glycine mischarging by AlaRS. Acts via tRNA-based rather than protein-based catalysis; rejects L-amino acids rather than detecting D-amino acids in the active site. By recycling D-aminoacyl-tRNA to D-amino acids and free tRNA molecules, this enzyme counteracts the toxicity associated with the formation of D-aminoacyl-tRNA entities in vivo and helps enforce protein L-homochirality. This chain is D-aminoacyl-tRNA deacylase, found in Chlorobaculum parvum (strain DSM 263 / NCIMB 8327) (Chlorobium vibrioforme subsp. thiosulfatophilum).